Consider the following 193-residue polypeptide: Cryptic protein (193 aa).

An N-terminal signal peptide occupies residues 1-25 (MFWRKHVRILFTVTLIWQAIHLGKG). Asn-38 and Asn-60 each carry an N-linked (GlcNAc...) asparagine glycan. 2 disulfide bridges follow: Cys-91–Cys-103 and Cys-105–Cys-114. An EGF-like domain is found at 91–115 (CQNGGTCILGAFCACPKHFSGRHCE).

It belongs to the EGF-CFC (Cripto-1/FRL1/Cryptic) family.

Its subcellular location is the cell membrane. The protein localises to the secreted. Its function is as follows. May play a role in mesoderm and/or neural patterning during gastrulation. This chain is Cryptic protein (CFC1), found in Gallus gallus (Chicken).